Here is a 366-residue protein sequence, read N- to C-terminus: Putative [LysW]-aminoadipate semialdehyde/glutamate semialdehyde transaminase (366 aa).

Pyridoxal 5'-phosphate is bound by residues 90-91 (GT) and F117. R120 serves as a coordination point for substrate. 202–205 (DEVQ) lines the pyridoxal 5'-phosphate pocket. Position 230 is an N6-(pyridoxal phosphate)lysine (K230). S254 serves as a coordination point for substrate. T255 is a binding site for pyridoxal 5'-phosphate.

This sequence belongs to the class-III pyridoxal-phosphate-dependent aminotransferase family. LysJ subfamily. As to quaternary structure, homodimer. The cofactor is pyridoxal 5'-phosphate.

It localises to the cytoplasm. It catalyses the reaction [amino-group carrier protein]-C-terminal-gamma-(L-lysyl)-L-glutamate + 2-oxoglutarate = [amino-group carrier protein]-C-terminal-N-(1-carboxy-5-oxopentan-1-yl)-L-glutamine + L-glutamate. The catalysed reaction is [amino-group carrier protein]-C-terminal-gamma-(L-ornithyl)-L-glutamate + 2-oxoglutarate = [amino-group carrier protein]-C-terminal-gamma-(L-glutamyl-5-semialdehyde)-L-glutamate + L-glutamate. Its pathway is amino-acid biosynthesis; L-lysine biosynthesis via AAA pathway; L-lysine from L-alpha-aminoadipate (Thermus route): step 4/5. It participates in amino-acid biosynthesis; L-arginine biosynthesis. Involved in both the arginine and lysine biosynthetic pathways. The polypeptide is Putative [LysW]-aminoadipate semialdehyde/glutamate semialdehyde transaminase (Pyrococcus horikoshii (strain ATCC 700860 / DSM 12428 / JCM 9974 / NBRC 100139 / OT-3)).